The chain runs to 423 residues: Serine hydroxymethyltransferase (423 aa).

(6S)-5,6,7,8-tetrahydrofolate contacts are provided by residues L120 and 124–126 (GHL). An N6-(pyridoxal phosphate)lysine modification is found at K229. 353-355 (SPF) is a binding site for (6S)-5,6,7,8-tetrahydrofolate.

It belongs to the SHMT family. As to quaternary structure, homodimer. Pyridoxal 5'-phosphate serves as cofactor.

It localises to the cytoplasm. The enzyme catalyses (6R)-5,10-methylene-5,6,7,8-tetrahydrofolate + glycine + H2O = (6S)-5,6,7,8-tetrahydrofolate + L-serine. It participates in one-carbon metabolism; tetrahydrofolate interconversion. Its pathway is amino-acid biosynthesis; glycine biosynthesis; glycine from L-serine: step 1/1. Functionally, catalyzes the reversible interconversion of serine and glycine with tetrahydrofolate (THF) serving as the one-carbon carrier. This reaction serves as the major source of one-carbon groups required for the biosynthesis of purines, thymidylate, methionine, and other important biomolecules. Also exhibits THF-independent aldolase activity toward beta-hydroxyamino acids, producing glycine and aldehydes, via a retro-aldol mechanism. In Prochlorococcus marinus (strain MIT 9301), this protein is Serine hydroxymethyltransferase.